A 358-amino-acid chain; its full sequence is Probable branched-chain-amino-acid aminotransferase (358 aa).

Position 196 is an N6-(pyridoxal phosphate)lysine (lysine 196).

Belongs to the class-IV pyridoxal-phosphate-dependent aminotransferase family. The cofactor is pyridoxal 5'-phosphate.

It carries out the reaction L-leucine + 2-oxoglutarate = 4-methyl-2-oxopentanoate + L-glutamate. It catalyses the reaction L-isoleucine + 2-oxoglutarate = (S)-3-methyl-2-oxopentanoate + L-glutamate. The catalysed reaction is L-valine + 2-oxoglutarate = 3-methyl-2-oxobutanoate + L-glutamate. It functions in the pathway amino-acid biosynthesis; L-isoleucine biosynthesis; L-isoleucine from 2-oxobutanoate: step 4/4. It participates in amino-acid biosynthesis; L-leucine biosynthesis; L-leucine from 3-methyl-2-oxobutanoate: step 4/4. Its pathway is amino-acid biosynthesis; L-valine biosynthesis; L-valine from pyruvate: step 4/4. Its function is as follows. Acts on leucine, isoleucine and valine. This is Probable branched-chain-amino-acid aminotransferase (ilvE) from Staphylococcus aureus (strain MRSA252).